The sequence spans 182 residues: ATP-dependent protease subunit HslV (182 aa).

Thr-9 is a catalytic residue. The Na(+) site is built by Ala-167, Cys-170, and Thr-173.

The protein belongs to the peptidase T1B family. HslV subfamily. In terms of assembly, a double ring-shaped homohexamer of HslV is capped on each side by a ring-shaped HslU homohexamer. The assembly of the HslU/HslV complex is dependent on binding of ATP.

The protein localises to the cytoplasm. The enzyme catalyses ATP-dependent cleavage of peptide bonds with broad specificity.. Its activity is regulated as follows. Allosterically activated by HslU binding. In terms of biological role, protease subunit of a proteasome-like degradation complex believed to be a general protein degrading machinery. The polypeptide is ATP-dependent protease subunit HslV (Enterococcus faecalis (strain ATCC 700802 / V583)).